The chain runs to 590 residues: UvrABC system protein C (590 aa).

In terms of domain architecture, GIY-YIG spans 11-85; it reads ETPGVYLWKR…IKAHRPLYNV (75 aa). Positions 194–229 constitute a UVR domain; sequence DGLLQELEAKMREAARRLEFERAAEIRDQMEALRAF.

This sequence belongs to the UvrC family. As to quaternary structure, interacts with UvrB in an incision complex.

It is found in the cytoplasm. The UvrABC repair system catalyzes the recognition and processing of DNA lesions. UvrC both incises the 5' and 3' sides of the lesion. The N-terminal half is responsible for the 3' incision and the C-terminal half is responsible for the 5' incision. In Thermus thermophilus (strain ATCC 27634 / DSM 579 / HB8), this protein is UvrABC system protein C.